Reading from the N-terminus, the 279-residue chain is MANLRAQILEELGAQPTIDAAGEIRTRVQFLKDYLLSTPAKGFVLGISGGQDSTLTGRLAQLAASELREEGHDAEFVAVRLPYGTQADESDAQISLDFIKPDRSVVVNVKPGADATAKESSEALRDIIGDGGELRDFVRGNIKARERMVIQYSIAGQLGYLVVGTDHAAEAITGFFTKFGDGGVDVTPLTGLSKRQGAALLRELGAPESTWKKVPTADLEDDRPALPDEEALGVTYAQIDDYLEGKDVPEDIARKLETMFLNTRHKRTVPVTPLDTWWR.

An ATP-binding site is contributed by 46-53 (GISGGQDS). Mg(2+) is bound at residue Asp52. Deamido-NAD(+) is bound at residue Arg145. Residue Thr165 participates in ATP binding. A Mg(2+)-binding site is contributed by Glu170. Deamido-NAD(+) is bound by residues Lys178 and Asp185. Positions 194 and 216 each coordinate ATP. 265-266 (HK) provides a ligand contact to deamido-NAD(+).

The protein belongs to the NAD synthetase family. In terms of assembly, homodimer.

The catalysed reaction is deamido-NAD(+) + NH4(+) + ATP = AMP + diphosphate + NAD(+) + H(+). It participates in cofactor biosynthesis; NAD(+) biosynthesis; NAD(+) from deamido-NAD(+) (ammonia route): step 1/1. Catalyzes the ATP-dependent amidation of deamido-NAD to form NAD. Uses ammonia as a nitrogen source. In Rhodococcus opacus (strain B4), this protein is NH(3)-dependent NAD(+) synthetase.